A 348-amino-acid chain; its full sequence is Thioredoxin-related protein DsbJ (348 aa).

The N-terminal stretch at 1-32 (MILLQNIKRCSLKQLKVLATLLLSLSLPTLEA) is a signal peptide.

The protein localises to the periplasm. The chain is Thioredoxin-related protein DsbJ (dsbJ) from Chlamydia pneumoniae (Chlamydophila pneumoniae).